The following is a 257-amino-acid chain: UPF0246 protein Ent638_0568 (257 aa).

It belongs to the UPF0246 family.

This chain is UPF0246 protein Ent638_0568, found in Enterobacter sp. (strain 638).